A 272-amino-acid chain; its full sequence is 2-dehydro-3-deoxyphosphooctonate aldolase (272 aa).

This sequence belongs to the KdsA family.

The protein resides in the cytoplasm. It carries out the reaction D-arabinose 5-phosphate + phosphoenolpyruvate + H2O = 3-deoxy-alpha-D-manno-2-octulosonate-8-phosphate + phosphate. It participates in carbohydrate biosynthesis; 3-deoxy-D-manno-octulosonate biosynthesis; 3-deoxy-D-manno-octulosonate from D-ribulose 5-phosphate: step 2/3. The protein operates within bacterial outer membrane biogenesis; lipopolysaccharide biosynthesis. This Geotalea daltonii (strain DSM 22248 / JCM 15807 / FRC-32) (Geobacter daltonii) protein is 2-dehydro-3-deoxyphosphooctonate aldolase.